A 174-amino-acid polypeptide reads, in one-letter code: V-type proton ATPase catalytic subunit A (174 aa).

It belongs to the ATPase alpha/beta chains family. In terms of assembly, V-ATPase is a heteromultimeric enzyme made up of two complexes: the ATP-hydrolytic V1 complex and the proton translocation V0 complex. The V1 complex consists of three catalytic AB heterodimers that form a heterohexamer, three peripheral stalks each consisting of EG heterodimers, one central rotor including subunits D and F, and the regulatory subunits C and H. The proton translocation complex V0 consists of the proton transport subunit a, a ring of proteolipid subunits c9c'', rotary subunit d, subunits e and f, and the accessory subunits ATP6AP1/Ac45 and ATP6AP2/PRR. Interacts with the V0 complex V-ATPase subunit a4 ATP6V0A4. Interacts with WFS1. Interacts with alpha-crystallin B chain/CRYAB and with MTOR, forming a ternary complex.

It localises to the cytoplasm. Its subcellular location is the cytosol. The protein localises to the cytoplasmic vesicle. The protein resides in the secretory vesicle. It is found in the clathrin-coated vesicle membrane. It localises to the lysosome. It catalyses the reaction ATP + H2O + 4 H(+)(in) = ADP + phosphate + 5 H(+)(out). Its activity is regulated as follows. ATP hydrolysis occurs at the interface between the nucleotide-binding domains of subunits A and B. ATP hydrolysis triggers a conformational change in the subunits D and F, which induces a shift of subunit d. The c-ring is subsequently rotated and results in a continuous proton translocation across the membrane. In terms of biological role, catalytic subunit of the V1 complex of vacuolar(H+)-ATPase (V-ATPase), a multisubunit enzyme composed of a peripheral complex (V1) that hydrolyzes ATP and a membrane integral complex (V0) that translocates protons. V-ATPase is responsible for acidifying and maintaining the pH of intracellular compartments and in some cell types, is targeted to the plasma membrane, where it is responsible for acidifying the extracellular environment. In aerobic conditions, involved in intracellular iron homeostasis, thus triggering the activity of Fe(2+) prolyl hydroxylase (PHD) enzymes, and leading to HIF1A hydroxylation and subsequent proteasomal degradation. May play a role in neurite development and synaptic connectivity. The sequence is that of V-type proton ATPase catalytic subunit A from Mesocricetus auratus (Golden hamster).